Consider the following 415-residue polypeptide: Imidazolonepropionase (415 aa).

The Fe(3+) site is built by histidine 83 and histidine 85. 2 residues coordinate Zn(2+): histidine 83 and histidine 85. Residues arginine 92, tyrosine 155, and histidine 188 each contribute to the 4-imidazolone-5-propanoate site. Tyrosine 155 is a binding site for N-formimidoyl-L-glutamate. Residue histidine 250 participates in Fe(3+) binding. Position 250 (histidine 250) interacts with Zn(2+). Residue glutamine 253 participates in 4-imidazolone-5-propanoate binding. Aspartate 324 is a binding site for Fe(3+). A Zn(2+)-binding site is contributed by aspartate 324. N-formimidoyl-L-glutamate contacts are provided by asparagine 326 and glycine 328. Serine 329 provides a ligand contact to 4-imidazolone-5-propanoate.

It belongs to the metallo-dependent hydrolases superfamily. HutI family. Zn(2+) serves as cofactor. Requires Fe(3+) as cofactor.

Its subcellular location is the cytoplasm. It carries out the reaction 4-imidazolone-5-propanoate + H2O = N-formimidoyl-L-glutamate. It participates in amino-acid degradation; L-histidine degradation into L-glutamate; N-formimidoyl-L-glutamate from L-histidine: step 3/3. Functionally, catalyzes the hydrolytic cleavage of the carbon-nitrogen bond in imidazolone-5-propanoate to yield N-formimidoyl-L-glutamate. It is the third step in the universal histidine degradation pathway. In Rubrobacter xylanophilus (strain DSM 9941 / JCM 11954 / NBRC 16129 / PRD-1), this protein is Imidazolonepropionase.